The primary structure comprises 188 residues: Protease-associated domain-containing protein 1 (188 aa).

An N-terminal signal peptide occupies residues 1 to 21 (MSRGAAGWCCLVLWLPTCVAA). The PA domain occupies 83–163 (IQDQIALVER…RSLEQHGLPW (81 aa)). Residues N121 and N171 are each glycosylated (N-linked (GlcNAc...) asparagine).

Post-translationally, N-glycosylated; required for efficient secretion. In terms of tissue distribution, expressed in metabolically active tissues such as liver, muscle, adipose, and heart and different brain regions like cortex and hypothalamus, expression is acutely regulated by the nutritional state.

The protein resides in the secreted. In terms of biological role, plays a role in the modulation of physical activity and adiposity. The chain is Protease-associated domain-containing protein 1 from Mus musculus (Mouse).